The following is a 599-amino-acid chain: Membrane protein insertase YidC (599 aa).

A helical membrane pass occupies residues 6–26 (NYFIAIALSVVIVLAWQFLYM). The interval 35–78 (RAEEARQAQQQTTQQQPAPGAAPGATVEGAPPASSTQAAATATR) is disordered. Positions 41 to 76 (QAQQQTTQQQPAPGAAPGATVEGAPPASSTQAAATA) are enriched in low complexity. A run of 4 helical transmembrane segments spans residues 378-398 (FGVA…PLAS), 448-468 (WPML…YVTI), 501-521 (VPHF…MFLQ), and 536-556 (IFTW…AGLV).

The protein belongs to the OXA1/ALB3/YidC family. Type 1 subfamily. Interacts with the Sec translocase complex via SecD. Specifically interacts with transmembrane segments of nascent integral membrane proteins during membrane integration.

The protein resides in the cell inner membrane. Functionally, required for the insertion and/or proper folding and/or complex formation of integral membrane proteins into the membrane. Involved in integration of membrane proteins that insert both dependently and independently of the Sec translocase complex, as well as at least some lipoproteins. Aids folding of multispanning membrane proteins. The polypeptide is Membrane protein insertase YidC (Agrobacterium fabrum (strain C58 / ATCC 33970) (Agrobacterium tumefaciens (strain C58))).